Here is a 313-residue protein sequence, read N- to C-terminus: Formimidoylglutamase (313 aa).

Mn(2+) contacts are provided by His-130, Asp-155, His-157, Asp-159, Asp-241, and Asp-243.

This sequence belongs to the arginase family. Mn(2+) serves as cofactor.

It carries out the reaction N-formimidoyl-L-glutamate + H2O = formamide + L-glutamate. Its pathway is amino-acid degradation; L-histidine degradation into L-glutamate; L-glutamate from N-formimidoyl-L-glutamate (hydrolase route): step 1/1. Functionally, catalyzes the conversion of N-formimidoyl-L-glutamate to L-glutamate and formamide. This is Formimidoylglutamase from Salmonella agona (strain SL483).